A 294-amino-acid chain; its full sequence is HTH-type transcriptional activator AmpR (294 aa).

In terms of domain architecture, HTH lysR-type spans 6 to 63 (IPLNSLRAFEAAARQLSFTKAAIELNVTHAAISQQVKALEQRLNCRLFIRISRGLVLT). A DNA-binding region (H-T-H motif) is located at residues 23-42 (FTKAAIELNVTHAAISQQVK).

It belongs to the LysR transcriptional regulatory family.

It localises to the cytoplasm. In terms of biological role, this protein is a positive regulator of gene expression of beta-lactamase (AmpC). In Yersinia enterocolitica, this protein is HTH-type transcriptional activator AmpR (ampR).